Consider the following 88-residue polypeptide: Apolipoprotein C-I (88 aa).

Residues 1 to 26 (MRLILSLPVLVVVLSMVLEGPAPAQA) form the signal peptide.

This sequence belongs to the apolipoprotein C1 family.

It localises to the secreted. Its function is as follows. Inhibitor of lipoprotein binding to the low density lipoprotein (LDL) receptor, LDL receptor-related protein, and very low density lipoprotein (VLDL) receptor. Associates with high density lipoproteins (HDL) and the triacylglycerol-rich lipoproteins in the plasma and makes up about 10% of the protein of the VLDL and 2% of that of HDL. Appears to interfere directly with fatty acid uptake and is also the major plasma inhibitor of cholesteryl ester transfer protein (CETP). Binds free fatty acids and reduces their intracellular esterification. Modulates the interaction of APOE with beta-migrating VLDL and inhibits binding of beta-VLDL to the LDL receptor-related protein. The sequence is that of Apolipoprotein C-I (APOC1) from Lycaon pictus (African wild dog).